The sequence spans 399 residues: S-adenosylmethionine synthase (399 aa).

Residue H16 participates in ATP binding. A Mg(2+)-binding site is contributed by D18. E44 contributes to the K(+) binding site. L-methionine-binding residues include E57 and Q100. The interval 100–110 is flexible loop; that stretch reads QSPDIAQGVDD. Residues 174 to 176, 241 to 242, D250, 256 to 257, A273, and K277 contribute to the ATP site; these read DAK, RF, and RK. D250 is a binding site for L-methionine. Position 281 (K281) interacts with L-methionine.

Belongs to the AdoMet synthase family. In terms of assembly, homotetramer; dimer of dimers. Requires Mg(2+) as cofactor. It depends on K(+) as a cofactor.

Its subcellular location is the cytoplasm. The enzyme catalyses L-methionine + ATP + H2O = S-adenosyl-L-methionine + phosphate + diphosphate. It participates in amino-acid biosynthesis; S-adenosyl-L-methionine biosynthesis; S-adenosyl-L-methionine from L-methionine: step 1/1. Catalyzes the formation of S-adenosylmethionine (AdoMet) from methionine and ATP. The overall synthetic reaction is composed of two sequential steps, AdoMet formation and the subsequent tripolyphosphate hydrolysis which occurs prior to release of AdoMet from the enzyme. The protein is S-adenosylmethionine synthase of Latilactobacillus sakei subsp. sakei (strain 23K) (Lactobacillus sakei subsp. sakei).